We begin with the raw amino-acid sequence, 141 residues long: Histone H2B (141 aa).

Over residues 1–10 (MAPKAAEKKP) the composition is skewed to basic and acidic residues. Residues 1 to 49 (MAPKAAEKKPSTGGKAPAGGKAPAEKKEAGKKTAAAASGDKKKRGKTRK) are disordered. Lys-8 and Lys-9 each carry N6-acetyllysine; alternate. Residues Lys-8 and Lys-9 each participate in a glycyl lysine isopeptide (Lys-Gly) (interchain with G-Cter in SUMO); alternate cross-link. Low complexity predominate over residues 11 to 22 (STGGKAPAGGKA). Lys-15 carries the post-translational modification N6-acetyllysine. At Lys-26 the chain carries N6-acetyllysine; alternate. A Glycyl lysine isopeptide (Lys-Gly) (interchain with G-Cter in SUMO); alternate cross-link involves residue Lys-26. Lys-27 participates in a covalent cross-link: Glycyl lysine isopeptide (Lys-Gly) (interchain with G-Cter in SUMO). Lys-135 participates in a covalent cross-link: Glycyl lysine isopeptide (Lys-Gly) (interchain with G-Cter in ubiquitin).

The protein belongs to the histone H2B family. The nucleosome is a histone octamer containing two molecules each of H2A, H2B, H3 and H4 assembled in one H3-H4 heterotetramer and two H2A-H2B heterodimers. The octamer wraps approximately 147 bp of DNA. In terms of processing, monoubiquitinated by the ubc2-bre1 complex to form H2BK123ub1. H2BK123ub1 gives a specific tag for epigenetic transcriptional activation and is also prerequisite for H3K4me and H3K79me formation. H2BK123ub1 also modulates the formation of double-strand breaks during meiosis and is a prerequisite for DNA-damage checkpoint activation. Acetylated by gcn5 to form H2BK11ac and H2BK16ac. H2BK16ac can also be formed by esa1. Acetylation of N-terminal lysines and particularly formation of H2BK11acK16ac has a positive effect on transcription. Post-translationally, sumoylation to form H2BK6su or H2BK7su, and probably also H2BK16su or H2BK17su, occurs preferentially near the telomeres and represses gene transcription.

The protein resides in the nucleus. The protein localises to the chromosome. In terms of biological role, core component of nucleosome. Nucleosomes wrap and compact DNA into chromatin, limiting DNA accessibility to the cellular machineries which require DNA as a template. Histones thereby play a central role in transcription regulation, DNA repair, DNA replication and chromosomal stability. DNA accessibility is regulated via a complex set of post-translational modifications of histones, also called histone code, and nucleosome remodeling. This chain is Histone H2B (htb1), found in Aspergillus oryzae (strain ATCC 42149 / RIB 40) (Yellow koji mold).